The chain runs to 159 residues: SsrA-binding protein (159 aa).

Over residues 137–147 (LAERQANRETE) the composition is skewed to basic and acidic residues. The disordered stretch occupies residues 137–159 (LAERQANRETEQAVGRRLKGMHD).

The protein belongs to the SmpB family.

Its subcellular location is the cytoplasm. In terms of biological role, required for rescue of stalled ribosomes mediated by trans-translation. Binds to transfer-messenger RNA (tmRNA), required for stable association of tmRNA with ribosomes. tmRNA and SmpB together mimic tRNA shape, replacing the anticodon stem-loop with SmpB. tmRNA is encoded by the ssrA gene; the 2 termini fold to resemble tRNA(Ala) and it encodes a 'tag peptide', a short internal open reading frame. During trans-translation Ala-aminoacylated tmRNA acts like a tRNA, entering the A-site of stalled ribosomes, displacing the stalled mRNA. The ribosome then switches to translate the ORF on the tmRNA; the nascent peptide is terminated with the 'tag peptide' encoded by the tmRNA and targeted for degradation. The ribosome is freed to recommence translation, which seems to be the essential function of trans-translation. In Nocardioides sp. (strain ATCC BAA-499 / JS614), this protein is SsrA-binding protein.